Reading from the N-terminus, the 364-residue chain is Aminomethyltransferase (364 aa).

The protein belongs to the GcvT family. As to quaternary structure, the glycine cleavage system is composed of four proteins: P, T, L and H.

It catalyses the reaction N(6)-[(R)-S(8)-aminomethyldihydrolipoyl]-L-lysyl-[protein] + (6S)-5,6,7,8-tetrahydrofolate = N(6)-[(R)-dihydrolipoyl]-L-lysyl-[protein] + (6R)-5,10-methylene-5,6,7,8-tetrahydrofolate + NH4(+). Its function is as follows. The glycine cleavage system catalyzes the degradation of glycine. This Shewanella baltica (strain OS155 / ATCC BAA-1091) protein is Aminomethyltransferase.